The chain runs to 436 residues: Enolase 1 (436 aa).

Residue S40 coordinates Mg(2+). Residues C147 and C169 are joined by a disulfide bond. (2R)-2-phosphoglycerate-binding residues include Q164 and E208. Residue E208 is the Proton donor of the active site. Residues D243, E296, and D322 each coordinate Mg(2+). D322 contributes to the (2R)-2-phosphoglycerate binding site. K347 functions as the Proton acceptor in the catalytic mechanism. R376 and S377 together coordinate (2R)-2-phosphoglycerate.

The protein belongs to the enolase family. Homodimer. Homotetramer. Interacts with methyltransferase METH; the interaction inhibits METH catalytic activity; 2-phosphoglycerate binding to ENO prevents the interaction with METH. Requires Mg(2+) as cofactor.

The protein localises to the cytoplasm. Its subcellular location is the nucleus. It carries out the reaction (2R)-2-phosphoglycerate = phosphoenolpyruvate + H2O. It functions in the pathway carbohydrate degradation; glycolysis; pyruvate from D-glyceraldehyde 3-phosphate: step 4/5. In terms of biological role, glycolytic enzyme that catalyzes the conversion of 2-phosphoglycerate to phosphoenolpyruvate. Inhibits tRNA methyltransferase METH catalytic activity in the absence of 2-phosphoglycerate. The polypeptide is Enolase 1 (Entamoeba histolytica (strain ATCC 30459 / HM-1:IMSS / ABRM)).